We begin with the raw amino-acid sequence, 315 residues long: Methionyl-tRNA formyltransferase (315 aa).

(6S)-5,6,7,8-tetrahydrofolate is bound at residue 111 to 114 (SLLP).

The protein belongs to the Fmt family.

It catalyses the reaction L-methionyl-tRNA(fMet) + (6R)-10-formyltetrahydrofolate = N-formyl-L-methionyl-tRNA(fMet) + (6S)-5,6,7,8-tetrahydrofolate + H(+). Its function is as follows. Attaches a formyl group to the free amino group of methionyl-tRNA(fMet). The formyl group appears to play a dual role in the initiator identity of N-formylmethionyl-tRNA by promoting its recognition by IF2 and preventing the misappropriation of this tRNA by the elongation apparatus. In Flavobacterium johnsoniae (strain ATCC 17061 / DSM 2064 / JCM 8514 / BCRC 14874 / CCUG 350202 / NBRC 14942 / NCIMB 11054 / UW101) (Cytophaga johnsonae), this protein is Methionyl-tRNA formyltransferase.